Here is an 859-residue protein sequence, read N- to C-terminus: Protein FAM171A1 (859 aa).

The N-terminal stretch at 1–20 (MSGSTAVALLFCVLSCSVWG) is a signal peptide. The Extracellular segment spans residues 21 to 307 (AGSKASHEHN…VTQDITSYHT (287 aa)). Residues Asn-163, Asn-194, and Asn-198 are each glycosylated (N-linked (GlcNAc...) asparagine). A helical membrane pass occupies residues 308–328 (IFLLAILGGIAFILLVLLCIL). At 329-859 (LYYCRRKCLK…ERPLLAFNKK (531 aa)) the chain is on the cytoplasmic side. Disordered regions lie at residues 397-421 (SRDF…LDNL), 484-509 (TNHV…PEPE), and 771-859 (QSPS…FNKK). Residues 400 to 416 (FGSREELLSHQEEKSRM) are compositionally biased toward basic and acidic residues. Polar residues-rich tracts occupy residues 484 to 497 (TNHV…NIQE) and 797 to 806 (SGSQTPSLQE). Residues 838–852 (GENKKSPWQKREERP) show a composition bias toward basic and acidic residues.

The protein belongs to the FAM171 family.

The protein resides in the cell membrane. In terms of biological role, may be involved in the regulation of the cytoskeletal dynamics, plays a role in actin stress fiber formation. The protein is Protein FAM171A1 (fam171a1) of Xenopus laevis (African clawed frog).